Here is a 278-residue protein sequence, read N- to C-terminus: 4-hydroxy-3-methylbut-2-enyl diphosphate reductase (278 aa).

Residue Cys12 participates in [4Fe-4S] cluster binding. His36 and His70 together coordinate (2E)-4-hydroxy-3-methylbut-2-enyl diphosphate. Residues His36 and His70 each contribute to the dimethylallyl diphosphate site. Residues His36 and His70 each coordinate isopentenyl diphosphate. Cys92 provides a ligand contact to [4Fe-4S] cluster. Position 120 (His120) interacts with (2E)-4-hydroxy-3-methylbut-2-enyl diphosphate. Position 120 (His120) interacts with dimethylallyl diphosphate. An isopentenyl diphosphate-binding site is contributed by His120. The active-site Proton donor is Glu122. Residue Thr158 participates in (2E)-4-hydroxy-3-methylbut-2-enyl diphosphate binding. Cys186 contacts [4Fe-4S] cluster. (2E)-4-hydroxy-3-methylbut-2-enyl diphosphate is bound by residues Ser214, Asn216, and Ser258. Dimethylallyl diphosphate-binding residues include Ser214, Asn216, and Ser258. Ser214, Asn216, and Ser258 together coordinate isopentenyl diphosphate.

The protein belongs to the IspH family. [4Fe-4S] cluster is required as a cofactor.

It catalyses the reaction isopentenyl diphosphate + 2 oxidized [2Fe-2S]-[ferredoxin] + H2O = (2E)-4-hydroxy-3-methylbut-2-enyl diphosphate + 2 reduced [2Fe-2S]-[ferredoxin] + 2 H(+). The enzyme catalyses dimethylallyl diphosphate + 2 oxidized [2Fe-2S]-[ferredoxin] + H2O = (2E)-4-hydroxy-3-methylbut-2-enyl diphosphate + 2 reduced [2Fe-2S]-[ferredoxin] + 2 H(+). It functions in the pathway isoprenoid biosynthesis; dimethylallyl diphosphate biosynthesis; dimethylallyl diphosphate from (2E)-4-hydroxy-3-methylbutenyl diphosphate: step 1/1. Its pathway is isoprenoid biosynthesis; isopentenyl diphosphate biosynthesis via DXP pathway; isopentenyl diphosphate from 1-deoxy-D-xylulose 5-phosphate: step 6/6. Functionally, catalyzes the conversion of 1-hydroxy-2-methyl-2-(E)-butenyl 4-diphosphate (HMBPP) into a mixture of isopentenyl diphosphate (IPP) and dimethylallyl diphosphate (DMAPP). Acts in the terminal step of the DOXP/MEP pathway for isoprenoid precursor biosynthesis. The polypeptide is 4-hydroxy-3-methylbut-2-enyl diphosphate reductase (Campylobacter lari (strain RM2100 / D67 / ATCC BAA-1060)).